Here is a 132-residue protein sequence, read N- to C-terminus: Small ribosomal subunit protein uS8 (132 aa).

Belongs to the universal ribosomal protein uS8 family. In terms of assembly, part of the 30S ribosomal subunit. Contacts proteins S5 and S12.

One of the primary rRNA binding proteins, it binds directly to 16S rRNA central domain where it helps coordinate assembly of the platform of the 30S subunit. This Corynebacterium jeikeium (strain K411) protein is Small ribosomal subunit protein uS8.